We begin with the raw amino-acid sequence, 549 residues long: MKNINPTHTQAWKSLEAHKAELSNTTIQDLFKQEKNRFDDYSLTFNNQILVDFSKNNINQTTLSHLRQLAQECALDSAKEAMFTGEKINRTENRAVLHTALRNRTNTPVLVDGKDVMPEVNAVLAKMKDFCQRIISGEWKGYTGKAITDVVNIGIGGSDLGPYTVTEALRPYKNHLNMHFVSNVDGTHIAETLKKVNPETTLFLVASKTFTTQETMTNAQSARDWLLKAAKDESAVAKHFAALSTNAKDVEKFGIDTNNMFEFWDWVGGRYSLWSAIGLSIALSIGFENFEALLNGAHEMDKHFRSTPIEQNIPTTLALVGLWNTNFLGAQTEAILPYDQYLHRFAAYFQQGNMESNGKYVDRDGNVINNYQTGPIIWGEPGTNGQHAFYQLIHQGTTLIPCDFIAPAQSHNPLADHHNKLLSNFFAQTEALAFGKTKEEVEAEFIKAGKSLDDVKNIVPFKVFTGNKPTNSILVQKITPFTLGALIAMYEHKIFVQGVIFNIFSFDQWGVELGKQLANRILPELTDSEKVASHDSSTNGLINQFKTWR.

Residue glutamate 355 is the Proton donor of the active site. Residues histidine 387 and lysine 515 contribute to the active site.

Belongs to the GPI family.

The protein resides in the cytoplasm. It catalyses the reaction alpha-D-glucose 6-phosphate = beta-D-fructose 6-phosphate. The protein operates within carbohydrate biosynthesis; gluconeogenesis. It participates in carbohydrate degradation; glycolysis; D-glyceraldehyde 3-phosphate and glycerone phosphate from D-glucose: step 2/4. Catalyzes the reversible isomerization of glucose-6-phosphate to fructose-6-phosphate. The sequence is that of Glucose-6-phosphate isomerase from Haemophilus influenzae (strain PittGG).